The sequence spans 53 residues: Large ribosomal subunit protein eL40 (53 aa).

The protein belongs to the eukaryotic ribosomal protein eL40 family.

The polypeptide is Large ribosomal subunit protein eL40 (Pyrobaculum aerophilum (strain ATCC 51768 / DSM 7523 / JCM 9630 / CIP 104966 / NBRC 100827 / IM2)).